Reading from the N-terminus, the 147-residue chain is Ribosomal RNA large subunit methyltransferase H (147 aa).

Residues leucine 64, glycine 96, and 115–120 (FSKMTF) each bind S-adenosyl-L-methionine.

Belongs to the RNA methyltransferase RlmH family. As to quaternary structure, homodimer.

The protein localises to the cytoplasm. The enzyme catalyses pseudouridine(1915) in 23S rRNA + S-adenosyl-L-methionine = N(3)-methylpseudouridine(1915) in 23S rRNA + S-adenosyl-L-homocysteine + H(+). Specifically methylates the pseudouridine at position 1915 (m3Psi1915) in 23S rRNA. The protein is Ribosomal RNA large subunit methyltransferase H of Acholeplasma laidlawii (strain PG-8A).